Here is a 424-residue protein sequence, read N- to C-terminus: UDP-N-acetylglucosamine 1-carboxyvinyltransferase (424 aa).

22–23 (KN) serves as a coordination point for phosphoenolpyruvate. Residue Arg93 coordinates UDP-N-acetyl-alpha-D-glucosamine. Cys117 serves as the catalytic Proton donor. Cys117 carries the 2-(S-cysteinyl)pyruvic acid O-phosphothioketal modification. UDP-N-acetyl-alpha-D-glucosamine is bound by residues 162–165 (KVSV), Asp307, and Ile329.

This sequence belongs to the EPSP synthase family. MurA subfamily.

The protein resides in the cytoplasm. It catalyses the reaction phosphoenolpyruvate + UDP-N-acetyl-alpha-D-glucosamine = UDP-N-acetyl-3-O-(1-carboxyvinyl)-alpha-D-glucosamine + phosphate. The protein operates within cell wall biogenesis; peptidoglycan biosynthesis. Cell wall formation. Adds enolpyruvyl to UDP-N-acetylglucosamine. The protein is UDP-N-acetylglucosamine 1-carboxyvinyltransferase of Glaesserella parasuis serovar 5 (strain SH0165) (Haemophilus parasuis).